The sequence spans 424 residues: Putative fasciclin-like arabinogalactan protein 20 (424 aa).

The helical transmembrane segment at 46 to 66 (LLTTFFLIFFVLDIDLVATSM) threads the bilayer. The 139-residue stretch at 56–194 (VLDIDLVATS…YVVIYGSDEF (139 aa)) folds into the FAS1 1 domain. 2 N-linked (GlcNAc...) asparagine glycosylation sites follow: asparagine 153 and asparagine 160. Over residues 199-226 (TKISDDSSSSSSIPSTTSSTGSIPIPSS) the composition is skewed to low complexity. Residues 199–246 (TKISDDSSSSSSIPSTTSSTGSIPIPSSATQTPPSPNIASDSTRNLPN) form a disordered region. The segment covering 227–246 (ATQTPPSPNIASDSTRNLPN) has biased composition (polar residues). N-linked (GlcNAc...) asparagine glycosylation is found at asparagine 246, asparagine 283, and asparagine 287. One can recognise an FAS1 2 domain in the interval 250–384 (PVNRFNIFES…IAVHGFNQMI (135 aa)). The interval 405–424 (QEEEGVHGEYSSELGDYGLH) is disordered.

The protein belongs to the fasciclin-like AGP family.

The protein resides in the membrane. May be a cell surface adhesion protein. In Arabidopsis thaliana (Mouse-ear cress), this protein is Putative fasciclin-like arabinogalactan protein 20 (FLA20).